The primary structure comprises 328 residues: UPF0421 protein SAR1980 (328 aa).

Transmembrane regions (helical) follow at residues 19 to 39 (IAIF…IYAI), 61 to 81 (LPAT…FGDQ), 108 to 128 (VAVL…IFNF), and 132 to 152 (TLTA…VFPP).

Belongs to the UPF0421 family.

The protein localises to the cell membrane. This chain is UPF0421 protein SAR1980, found in Staphylococcus aureus (strain MRSA252).